Consider the following 213-residue polypeptide: Orotate phosphoribosyltransferase (213 aa).

Lysine 26 is a binding site for 5-phospho-alpha-D-ribose 1-diphosphate. Residue phenylalanine 34 to phenylalanine 35 coordinates orotate. 5-phospho-alpha-D-ribose 1-diphosphate is bound by residues tyrosine 72–lysine 73, arginine 99, lysine 100, lysine 103, histidine 105, and aspartate 124–alanine 132. Residues threonine 128 and arginine 156 each contribute to the orotate site.

It belongs to the purine/pyrimidine phosphoribosyltransferase family. PyrE subfamily. As to quaternary structure, homodimer. Mg(2+) serves as cofactor.

It carries out the reaction orotidine 5'-phosphate + diphosphate = orotate + 5-phospho-alpha-D-ribose 1-diphosphate. It functions in the pathway pyrimidine metabolism; UMP biosynthesis via de novo pathway; UMP from orotate: step 1/2. In terms of biological role, catalyzes the transfer of a ribosyl phosphate group from 5-phosphoribose 1-diphosphate to orotate, leading to the formation of orotidine monophosphate (OMP). The protein is Orotate phosphoribosyltransferase of Alteromonas mediterranea (strain DSM 17117 / CIP 110805 / LMG 28347 / Deep ecotype).